The primary structure comprises 84 residues: Toxin Cex12 (84 aa).

A signal peptide spans 1 to 19 (MNSLLMITTCLILVGTVWA). Residues 20–83 (NDGYLFDKRK…ISRTPGKTCR (64 aa)) enclose the LCN-type CS-alpha/beta domain. Intrachain disulfides connect Cys31-Cys82, Cys35-Cys58, Cys44-Cys63, and Cys48-Cys65.

Belongs to the long (4 C-C) scorpion toxin superfamily. Sodium channel inhibitor family. Beta subfamily. In terms of tissue distribution, expressed by the venom gland.

The protein localises to the secreted. Beta toxins bind voltage-independently at site-4 of sodium channels (Nav) and shift the voltage of activation toward more negative potentials thereby affecting sodium channel activation and promoting spontaneous and repetitive firing. The protein is Toxin Cex12 of Centruroides exilicauda (Bark scorpion).